Reading from the N-terminus, the 390-residue chain is Elongation factor Ts, mitochondrial (390 aa).

The protein belongs to the EF-Ts family.

The protein localises to the mitochondrion. Functionally, associates with the EF-Tu.GDP complex and induces the exchange of GDP to GTP. It remains bound to the aminoacyl-tRNA.EF-Tu.GTP complex up to the GTP hydrolysis stage on the ribosome. The polypeptide is Elongation factor Ts, mitochondrial (Plasmodium falciparum (isolate 3D7)).